Reading from the N-terminus, the 428-residue chain is Sulfhydrogenase 1 subunit alpha (428 aa).

Residues cysteine 65, cysteine 68, cysteine 418, and cysteine 421 each coordinate Ni(2+). Fe cation is bound at residue cysteine 68. Cysteine 421 provides a ligand contact to Fe cation.

It belongs to the [NiFe]/[NiFeSe] hydrogenase large subunit family. Heterotetramer of alpha, beta, gamma and delta subunits. The nickel-containing alpha and delta subunits constitute the hydrogenase activity. The beta and gamma subunits (flavin-containing dimer) constitute the sulfur reductase activity. Requires Ni(2+) as cofactor. The cofactor is Fe cation.

The protein resides in the cytoplasm. It catalyses the reaction H2 + NADP(+) = NADPH + H(+). Functionally, part of a bifunctional enzyme complex that functions as an NADPH-dependent hydrogen-evolving hydrogenase with sulfur-reducing activity. May play a role in hydrogen cycling during fermentative growth. Activity not exhibited with NAD. The alpha and delta subunits form the hydrogenase component that catalyzes the reduction of protons to evolve hydrogen. The polypeptide is Sulfhydrogenase 1 subunit alpha (Pyrococcus furiosus (strain ATCC 43587 / DSM 3638 / JCM 8422 / Vc1)).